The chain runs to 37 residues: MKVAASVRKICEKCRLIRRRGRLLVICSNPKHKQRQG.

It belongs to the bacterial ribosomal protein bL36 family.

It localises to the plastid. It is found in the chloroplast. The polypeptide is Large ribosomal subunit protein bL36c (rpl36) (Pisum sativum (Garden pea)).